We begin with the raw amino-acid sequence, 444 residues long: COP9 signalosome complex subunit 2 (444 aa).

The tract at residues 1–31 (MSDNDDDFMCDDDEDYGLEYSEDSNSEPDVD) is disordered. The region spanning 255 to 417 (AHTDFFEAFK…QVLQLDKINS (163 aa)) is the PCI domain.

This sequence belongs to the CSN2 family. In terms of assembly, component of the CSN complex, probably composed of CSN1b, alien/CSN2, CSN3, CSN4, CSN5, CSN6, CSN7 and CSN8. Interacts with Rpn6. As to expression, expressed during embryonic stages 11-14 in the muscle attachment sites (apodemes); pharynx attachment to the roof of the mouth and in the epidermis of the head for the dorsal and ventral prothoracic pharyngeal muscle attachment. From stage 16 onwards expression is seen in all thoracic and abdominal apodemes.

It localises to the cytoplasm. The protein localises to the nucleus. In terms of biological role, component of the COP9 signalosome complex (CSN), a complex involved in various cellular and developmental processes. The CSN complex is an essential regulator of the ubiquitin (Ubl) conjugation pathway by mediating the deneddylation of the cullin subunits of the SCF-type E3 ligase complexes, leading to decrease the Ubl ligase activity of SCF. The CSN complex plays an essential role in oogenesis and embryogenesis and is required for proper photoreceptor R cell differentiation and promote lamina glial cell migration or axon targeting. It also promotes Ubl-dependent degradation of cyclin E (CycE) during early oogenesis. This Drosophila melanogaster (Fruit fly) protein is COP9 signalosome complex subunit 2.